Reading from the N-terminus, the 333-residue chain is GDP-fucose transporter 1 (333 aa).

The next 8 membrane-spanning stretches (helical) occupy residues 13 to 33 (SIKI…MVFL), 45 to 65 (APMF…FILG), 95 to 115 (LVFV…GVAF), 139 to 159 (TSMP…VGVN), 169 to 189 (MAGI…AIYI), 211 to 231 (AIFL…IAAS), 239 to 259 (YWFL…VSML), and 293 to 313 (TATW…YVLV).

It belongs to the TPT transporter family. SLC35C subfamily.

The protein resides in the golgi apparatus membrane. It carries out the reaction GMP(out) + GDP-beta-L-fucose(in) = GMP(in) + GDP-beta-L-fucose(out). Functionally, antiporter specific for GDP-l-fucose and depending on the concomitant reverse transport of GMP. Involved in GDP-fucose import from the cytoplasm into the Golgi lumen. The chain is GDP-fucose transporter 1 (slc35c1) from Monosiga brevicollis (Choanoflagellate).